We begin with the raw amino-acid sequence, 74 residues long: Translational regulator CsrA (74 aa).

It belongs to the CsrA/RsmA family. As to quaternary structure, homodimer; the beta-strands of each monomer intercalate to form a hydrophobic core, while the alpha-helices form wings that extend away from the core.

It is found in the cytoplasm. Functionally, a translational regulator that binds mRNA to regulate translation initiation and/or mRNA stability. Usually binds in the 5'-UTR at or near the Shine-Dalgarno sequence preventing ribosome-binding, thus repressing translation. Its main target seems to be the major flagellin gene, while its function is anatagonized by FliW. This is Translational regulator CsrA from Oceanobacillus iheyensis (strain DSM 14371 / CIP 107618 / JCM 11309 / KCTC 3954 / HTE831).